A 256-amino-acid chain; its full sequence is Thiazole synthase (256 aa).

Lysine 102 serves as the catalytic Schiff-base intermediate with DXP. 1-deoxy-D-xylulose 5-phosphate is bound by residues glycine 163, 189-190 (AG), and 211-212 (AT).

This sequence belongs to the ThiG family. Homotetramer. Forms heterodimers with either ThiH or ThiS.

It is found in the cytoplasm. The catalysed reaction is [ThiS sulfur-carrier protein]-C-terminal-Gly-aminoethanethioate + 2-iminoacetate + 1-deoxy-D-xylulose 5-phosphate = [ThiS sulfur-carrier protein]-C-terminal Gly-Gly + 2-[(2R,5Z)-2-carboxy-4-methylthiazol-5(2H)-ylidene]ethyl phosphate + 2 H2O + H(+). It participates in cofactor biosynthesis; thiamine diphosphate biosynthesis. Its function is as follows. Catalyzes the rearrangement of 1-deoxy-D-xylulose 5-phosphate (DXP) to produce the thiazole phosphate moiety of thiamine. Sulfur is provided by the thiocarboxylate moiety of the carrier protein ThiS. In vitro, sulfur can be provided by H(2)S. This chain is Thiazole synthase, found in Nocardia farcinica (strain IFM 10152).